The sequence spans 298 residues: Lipoyl synthase (298 aa).

Positions 43, 48, 54, 69, 73, 76, and 280 each coordinate [4Fe-4S] cluster. Positions 55-269 (FSSGTATFLI…AACGRGMGIP (215 aa)) constitute a Radical SAM core domain.

The protein belongs to the radical SAM superfamily. Lipoyl synthase family. It depends on [4Fe-4S] cluster as a cofactor.

Its subcellular location is the cytoplasm. It catalyses the reaction [[Fe-S] cluster scaffold protein carrying a second [4Fe-4S](2+) cluster] + N(6)-octanoyl-L-lysyl-[protein] + 2 oxidized [2Fe-2S]-[ferredoxin] + 2 S-adenosyl-L-methionine + 4 H(+) = [[Fe-S] cluster scaffold protein] + N(6)-[(R)-dihydrolipoyl]-L-lysyl-[protein] + 4 Fe(3+) + 2 hydrogen sulfide + 2 5'-deoxyadenosine + 2 L-methionine + 2 reduced [2Fe-2S]-[ferredoxin]. The protein operates within protein modification; protein lipoylation via endogenous pathway; protein N(6)-(lipoyl)lysine from octanoyl-[acyl-carrier-protein]: step 2/2. In terms of biological role, catalyzes the radical-mediated insertion of two sulfur atoms into the C-6 and C-8 positions of the octanoyl moiety bound to the lipoyl domains of lipoate-dependent enzymes, thereby converting the octanoylated domains into lipoylated derivatives. The chain is Lipoyl synthase from Nitratidesulfovibrio vulgaris (strain DP4) (Desulfovibrio vulgaris).